A 307-amino-acid chain; its full sequence is Thioredoxin-related transmembrane protein 2-B (307 aa).

A signal peptide spans 1–19 (MALLTPLFAFLYHLPQVYK). The Extracellular portion of the chain corresponds to 20-111 (WLLKPYYIAS…VILFFRLDIR (92 aa)). The helical transmembrane segment at 112–132 (LGLLYLTLCIVFLMTCKPPLY) threads the bilayer. The region spanning 132–269 (YMGPEYIKYF…LYQKSKKLGK (138 aa)) is the Thioredoxin domain. The Cytoplasmic segment spans residues 133-307 (MGPEYIKYFS…AMDTESKKDK (175 aa)). A disordered region spans residues 268-307 (GKTKEKLERPSELVFSTVPEEEEPEAETISAMDTESKKDK). The span at 269 to 278 (KTKEKLERPS) shows a compositional bias: basic and acidic residues. The Di-lysine motif signature appears at 304 to 307 (KKDK).

Monomer. Homodimer; disulfide-linked. Occurs in both reduced and oxidized monomeric form. Oxidative conditions increase homodimerization.

The protein localises to the endoplasmic reticulum membrane. It localises to the mitochondrion membrane. Functionally, endoplasmic reticulum and mitochondria-associated protein that probably functions as a regulator of cellular redox state and thereby regulates protein post-translational modification, protein folding and mitochondrial activity. The polypeptide is Thioredoxin-related transmembrane protein 2-B (tmx2b) (Danio rerio (Zebrafish)).